The primary structure comprises 433 residues: Enolase (433 aa).

Glutamine 167 is a binding site for (2R)-2-phosphoglycerate. Residue glutamate 209 is the Proton donor of the active site. The Mg(2+) site is built by aspartate 246, glutamate 291, and aspartate 318. The (2R)-2-phosphoglycerate site is built by lysine 343, arginine 372, serine 373, and lysine 394. Lysine 343 functions as the Proton acceptor in the catalytic mechanism.

The protein belongs to the enolase family. Component of the RNA degradosome, a multiprotein complex involved in RNA processing and mRNA degradation. The cofactor is Mg(2+).

The protein localises to the cytoplasm. The protein resides in the secreted. Its subcellular location is the cell surface. It carries out the reaction (2R)-2-phosphoglycerate = phosphoenolpyruvate + H2O. Its pathway is carbohydrate degradation; glycolysis; pyruvate from D-glyceraldehyde 3-phosphate: step 4/5. Catalyzes the reversible conversion of 2-phosphoglycerate (2-PG) into phosphoenolpyruvate (PEP). It is essential for the degradation of carbohydrates via glycolysis. The protein is Enolase of Sodalis glossinidius (strain morsitans).